A 519-amino-acid chain; its full sequence is Light-independent protochlorophyllide reductase subunit B (519 aa).

Asp36 contacts [4Fe-4S] cluster. The active-site Proton donor is the Asp274. Position 409–410 (409–410 (GL)) interacts with substrate. Residues 426-465 (DEAGPSHHGGHSPKPSEAARTPDKVEERADPAPEAPQTGS) form a disordered region. Basic and acidic residues predominate over residues 445–456 (RTPDKVEERADP).

This sequence belongs to the ChlB/BchB/BchZ family. As to quaternary structure, protochlorophyllide reductase is composed of three subunits; BchL, BchN and BchB. Forms a heterotetramer of two BchB and two BchN subunits. Requires [4Fe-4S] cluster as cofactor.

It carries out the reaction chlorophyllide a + oxidized 2[4Fe-4S]-[ferredoxin] + 2 ADP + 2 phosphate = protochlorophyllide a + reduced 2[4Fe-4S]-[ferredoxin] + 2 ATP + 2 H2O. Its pathway is porphyrin-containing compound metabolism; bacteriochlorophyll biosynthesis (light-independent). In terms of biological role, component of the dark-operative protochlorophyllide reductase (DPOR) that uses Mg-ATP and reduced ferredoxin to reduce ring D of protochlorophyllide (Pchlide) to form chlorophyllide a (Chlide). This reaction is light-independent. The NB-protein (BchN-BchB) is the catalytic component of the complex. This chain is Light-independent protochlorophyllide reductase subunit B, found in Jannaschia sp. (strain CCS1).